Consider the following 276-residue polypeptide: Large ribosomal subunit protein uL2 (276 aa).

Disordered regions lie at residues 1–50 (MPIK…GRVT) and 206–276 (GKAG…SKKR). Polar residues predominate over residues 7 to 19 (RPTTPTRRFQTVV). A compositionally biased stretch (basic and acidic residues) spans 20–38 (SREDITKQTPEKSLVESKK).

It belongs to the universal ribosomal protein uL2 family. As to quaternary structure, part of the 50S ribosomal subunit. Forms a bridge to the 30S subunit in the 70S ribosome.

Functionally, one of the primary rRNA binding proteins. Required for association of the 30S and 50S subunits to form the 70S ribosome, for tRNA binding and peptide bond formation. It has been suggested to have peptidyltransferase activity; this is somewhat controversial. Makes several contacts with the 16S rRNA in the 70S ribosome. The protein is Large ribosomal subunit protein uL2 of Solibacter usitatus (strain Ellin6076).